The primary structure comprises 247 residues: 6-phosphogluconolactonase (247 aa).

The protein belongs to the glucosamine/galactosamine-6-phosphate isomerase family. 6-phosphogluconolactonase subfamily.

The catalysed reaction is 6-phospho-D-glucono-1,5-lactone + H2O = 6-phospho-D-gluconate + H(+). The protein operates within carbohydrate degradation; pentose phosphate pathway; D-ribulose 5-phosphate from D-glucose 6-phosphate (oxidative stage): step 2/3. Its function is as follows. Hydrolysis of 6-phosphogluconolactone to 6-phosphogluconate. This Mycobacterium leprae (strain TN) protein is 6-phosphogluconolactonase (pgl).